We begin with the raw amino-acid sequence, 318 residues long: AT-hook motif nuclear-localized protein 7 (318 aa).

Disordered stretches follow at residues 1 to 76 (METS…PSSS) and 241 to 318 (SDQQ…LPVD). Residues 56-64 (KKRRGRPRK) carry the Bipartite nuclear localization signal motif. A DNA-binding region (a.T hook) is located at residues 56 to 68 (KKRRGRPRKYEAN). One can recognise a PPC domain in the interval 120–259 (GSNFTPHVIT…RKQRVEHAPA (140 aa)). The segment covering 243–256 (QQDHQKPRKQRVEH) has biased composition (basic and acidic residues). The span at 264–274 (VPPPPSPPPPA) shows a compositional bias: pro residues. The span at 288–312 (PPSSFGISSWTNGQDMPRNSATDIN) shows a compositional bias: polar residues.

It localises to the nucleus. Functionally, transcription factor that specifically binds AT-rich DNA sequences related to the nuclear matrix attachment regions (MARs). The sequence is that of AT-hook motif nuclear-localized protein 7 from Arabidopsis thaliana (Mouse-ear cress).